Here is a 158-residue protein sequence, read N- to C-terminus: Ribosome maturation factor RimP (158 aa).

Belongs to the RimP family.

It localises to the cytoplasm. Required for maturation of 30S ribosomal subunits. This is Ribosome maturation factor RimP from Lactobacillus helveticus (strain DPC 4571).